The chain runs to 489 residues: uncharacterized protein (489 aa).

At T26 the chain carries Phosphothreonine. Phosphoserine is present on S27. The next 3 helical transmembrane spans lie at 63-83, 182-202, and 221-241; these read IVYL…IEFA, LVWS…ILCA, and VFKL…IAFL. Disordered stretches follow at residues 260–312, 401–435, and 450–489; these read PKTS…APLE, STLL…VPPS, and PSIN…PVVH. Residue S263 is modified to Phosphoserine. Polar residues predominate over residues 268-282; it reads QRGTSSSQPSENDAN. Residues 450–465 show a composition bias toward polar residues; it reads PSINNVGGSTAPSVNN. Low complexity predominate over residues 477-489; that stretch reads SRSSTLTERPVVH.

It localises to the endoplasmic reticulum membrane. This is an uncharacterized protein from Schizosaccharomyces pombe (strain 972 / ATCC 24843) (Fission yeast).